Reading from the N-terminus, the 229-residue chain is Putative N-acetylmannosamine-6-phosphate 2-epimerase (229 aa).

The protein belongs to the NanE family.

The enzyme catalyses an N-acyl-D-glucosamine 6-phosphate = an N-acyl-D-mannosamine 6-phosphate. It participates in amino-sugar metabolism; N-acetylneuraminate degradation; D-fructose 6-phosphate from N-acetylneuraminate: step 3/5. Its function is as follows. Converts N-acetylmannosamine-6-phosphate (ManNAc-6-P) to N-acetylglucosamine-6-phosphate (GlcNAc-6-P). This chain is Putative N-acetylmannosamine-6-phosphate 2-epimerase, found in Escherichia coli O157:H7.